Reading from the N-terminus, the 130-residue chain is MFKFVMICAVLGLAVANPPVPHSLGRSEDVHADVLSQSDDVRADGFDSSLHTSNGIEQAASGDAHGNIHGNFGWISPEGEHVEVKYVANENGYQPSGAWIPTPPPIPEAIARAVAWLESHPPAPEHPRHH.

The N-terminal stretch at 1-16 is a signal peptide; that stretch reads MFKFVMICAVLGLAVA. The Chitin-binding type R&amp;R domain occupies 43-104; the sequence is ADGFDSSLHT…PSGAWIPTPP (62 aa).

Its function is as follows. Component of the larval cuticle. This is Larval cuticle protein 1 (Lcp1) from Drosophila melanogaster (Fruit fly).